A 266-amino-acid chain; its full sequence is Dickkopf-related protein 1 (266 aa).

Residues 1-31 (MMALGAAGATRVFVAMVAAALGGHPLLGVSA) form the signal peptide. An O-linked (GalNAc...) serine glycan is attached at S61. 10 disulfide bridges follow: C85-C97, C91-C111, C114-C128, C121-C133, C127-C138, C189-C201, C195-C210, C200-C237, C220-C245, and C239-C263. The interval 85–138 (CAEDEECGTDEYCASPTRGGDAGVQICLACRKRRKRCMRHAMCCPGNYCKNGIC) is DKK-type Cys-1. Positions 189-263 (CLRSSDCASG…ASNSSRLHTC (75 aa)) are DKK-type Cys-2. An N-linked (GlcNAc...) asparagine glycan is attached at N256.

Belongs to the dickkopf family. Interacts with LRP6. Interacts (via the C-terminal Cys-rich domain) with LRP5 (via beta-propeller regions 3 and 4); the interaction, enhanced by MESD and or KREMEN, antagonizes Wnt-mediated signaling. Forms a ternary complex with LRP6 and KREM1. Interacts with KREM1. Placenta.

The protein resides in the secreted. In terms of biological role, antagonizes canonical Wnt signaling by inhibiting LRP5/6 interaction with Wnt and by forming a ternary complex with the transmembrane protein KREMEN that promotes internalization of LRP5/6. DKKs play an important role in vertebrate development, where they locally inhibit Wnt regulated processes such as antero-posterior axial patterning, limb development, somitogenesis and eye formation. In the adult, Dkks are implicated in bone formation and bone disease, cancer and Alzheimer disease. Inhibits the pro-apoptotic function of KREMEN1 in a Wnt-independent manner, and has anti-apoptotic activity. In Homo sapiens (Human), this protein is Dickkopf-related protein 1 (DKK1).